The following is a 466-amino-acid chain: 3-isopropylmalate dehydratase large subunit (466 aa).

Cys-347, Cys-407, and Cys-410 together coordinate [4Fe-4S] cluster.

The protein belongs to the aconitase/IPM isomerase family. LeuC type 1 subfamily. In terms of assembly, heterodimer of LeuC and LeuD. It depends on [4Fe-4S] cluster as a cofactor.

The enzyme catalyses (2R,3S)-3-isopropylmalate = (2S)-2-isopropylmalate. It functions in the pathway amino-acid biosynthesis; L-leucine biosynthesis; L-leucine from 3-methyl-2-oxobutanoate: step 2/4. Its function is as follows. Catalyzes the isomerization between 2-isopropylmalate and 3-isopropylmalate, via the formation of 2-isopropylmaleate. The sequence is that of 3-isopropylmalate dehydratase large subunit from Citrobacter koseri (strain ATCC BAA-895 / CDC 4225-83 / SGSC4696).